Here is a 311-residue protein sequence, read N- to C-terminus: MSSLFSSFCLVIAIFESVVGLLGNGTIVAVSSTSCIRSKILSSYDVIVIFLSLSRFFLQLWMILDFLLIFFCQPSYYEENLFVTFKTVFIFLNSYSFWFAAWLSVFYCVKVASFTQSFLSWLKQRIASLIPWMLITSSLFSFATSLPFFWDSYNAHSNFTTPLTMTNSSKRITTRKTNLIFLILLCNVGIALPSIMLVFSSILLIRSLWRHTRQMQNNATGFRDPSLEALIGAIKTVFSFLLLYITNFIALILILSDTFVPLSTEEAICVVVVAACPAGQSMVLIWSNPRFRELLSSILHYVNSCVRARCS.

Residues 1–9 (MSSLFSSFC) lie on the Extracellular side of the membrane. Residues 10-30 (LVIAIFESVVGLLGNGTIVAV) traverse the membrane as a helical segment. Residues 31-55 (SSTSCIRSKILSSYDVIVIFLSLSR) are Cytoplasmic-facing. A helical membrane pass occupies residues 56 to 76 (FFLQLWMILDFLLIFFCQPSY). Topologically, residues 77-87 (YEENLFVTFKT) are extracellular. A helical membrane pass occupies residues 88 to 108 (VFIFLNSYSFWFAAWLSVFYC). The Cytoplasmic portion of the chain corresponds to 109–128 (VKVASFTQSFLSWLKQRIAS). A helical membrane pass occupies residues 129–149 (LIPWMLITSSLFSFATSLPFF). The Extracellular segment spans residues 150–178 (WDSYNAHSNFTTPLTMTNSSKRITTRKTN). Residues 179-199 (LIFLILLCNVGIALPSIMLVF) form a helical membrane-spanning segment. Over 200-235 (SSILLIRSLWRHTRQMQNNATGFRDPSLEALIGAIK) the chain is Cytoplasmic. A helical transmembrane segment spans residues 236–256 (TVFSFLLLYITNFIALILILS). Residues 257–266 (DTFVPLSTEE) lie on the Extracellular side of the membrane. A helical transmembrane segment spans residues 267-287 (AICVVVVAACPAGQSMVLIWS). Residues 288 to 311 (NPRFRELLSSILHYVNSCVRARCS) are Cytoplasmic-facing.

The protein belongs to the G-protein coupled receptor T2R family. Expressed in the oral cavity, as well as in the gastrointestinal tract, including in the upper palate, tongue, proventriculus, ventriculus, duodenum, jejunum, ileum, cecum and colon.

The protein resides in the cell membrane. Its function is as follows. Bitter taste receptor. Binds quinine, dextromethorphan, diphenhydramine, diphenidol, chlorpheniramine, diphenidol, chloramphenicol, chloroquine and coumarin, this latter being a weak agonist, as well as epiquinidine, ethylhydrocupreine and quinidine. This Gallus gallus (Chicken) protein is Taste receptor type 2 member 40 (TAS2R40).